The chain runs to 433 residues: GPI mannosyltransferase 2 (433 aa).

The next 9 membrane-spanning stretches (helical) occupy residues Leu4 to Leu24, Thr109 to Thr129, Ala148 to Thr165, Leu172 to Tyr194, Phe204 to Leu226, Ala247 to Phe267, Ile322 to Phe342, Leu354 to Ile374, and Gly410 to Leu430.

It belongs to the PIGV family.

Its subcellular location is the endoplasmic reticulum membrane. Its pathway is glycolipid biosynthesis; glycosylphosphatidylinositol-anchor biosynthesis. In terms of biological role, mannosyltransferase involved in glycosylphosphatidylinositol-anchor biosynthesis. Transfers the second mannose to the glycosylphosphatidylinositol during GPI precursor assembly. This is GPI mannosyltransferase 2 (GPI18) from Candida glabrata (strain ATCC 2001 / BCRC 20586 / JCM 3761 / NBRC 0622 / NRRL Y-65 / CBS 138) (Yeast).